Here is a 103-residue protein sequence, read N- to C-terminus: Large ribosomal subunit protein bL21 (103 aa).

Belongs to the bacterial ribosomal protein bL21 family. As to quaternary structure, part of the 50S ribosomal subunit. Contacts protein L20.

Its function is as follows. This protein binds to 23S rRNA in the presence of protein L20. The chain is Large ribosomal subunit protein bL21 from Cupriavidus necator (strain ATCC 17699 / DSM 428 / KCTC 22496 / NCIMB 10442 / H16 / Stanier 337) (Ralstonia eutropha).